The following is a 245-amino-acid chain: 1-(5-phosphoribosyl)-5-[(5-phosphoribosylamino)methylideneamino] imidazole-4-carboxamide isomerase (245 aa).

Catalysis depends on Asp-7, which acts as the Proton acceptor. Residue Asp-129 is the Proton donor of the active site.

The protein belongs to the HisA/HisF family.

It localises to the cytoplasm. It catalyses the reaction 1-(5-phospho-beta-D-ribosyl)-5-[(5-phospho-beta-D-ribosylamino)methylideneamino]imidazole-4-carboxamide = 5-[(5-phospho-1-deoxy-D-ribulos-1-ylimino)methylamino]-1-(5-phospho-beta-D-ribosyl)imidazole-4-carboxamide. It participates in amino-acid biosynthesis; L-histidine biosynthesis; L-histidine from 5-phospho-alpha-D-ribose 1-diphosphate: step 4/9. This is 1-(5-phosphoribosyl)-5-[(5-phosphoribosylamino)methylideneamino] imidazole-4-carboxamide isomerase from Aliivibrio fischeri (strain MJ11) (Vibrio fischeri).